A 239-amino-acid chain; its full sequence is Skn-1 dependent zygotic transcript 1 protein (239 aa).

Expressed in mesendodermal precursor cells of embryos.

In terms of biological role, may have a role in mesendoderm development during embryogenesis. In Caenorhabditis elegans, this protein is Skn-1 dependent zygotic transcript 1 protein (sdz-1).